The primary structure comprises 738 residues: MEHTYQYAWVIPLLPLPVIMSMGFGLFLIPTATKNLRRIWAFPSILLLSIAMVFSLHLSIQQINGSSIYQYLWSWTINNDFSLEFGYLVDPLTSIMLILITTVGILVLIYSDDYMSHDEGYLRFFVYISFFNTSMLGLVTSSNLIQIYFFWELVGMCSYLLIGFWFTRPIAASACQKAFVTNRVGDFGLLLGILGFFWITGSLEFRDLFKIANNWIPNNGINSLLTTLCAFLLFLGAVAKSAQFPLHVWLPDAMEGPTPISALIHAATMVAAGIFLLARLLPLFISLPLIMSFISLVGTITLFLGATLALAQRDIKRSLAYSTMSQLGYMMLALGIGSYQAALFHLITHAYSKALLFLGSGSVIHSMEPLVGYSPDKSQNMVLMGGLRKYVPITRTTFLCGTLSLCGIPPLACFWSKDEILSNSWLYSPFFGIIASFTAGLTAFYMFRIYLLTFDGYLRVNFQNYSSTKEGSLYSISLWGKSISKGVNRDFVLSTMKSGVSFFSQNIPKIPANTRNKIGSFSTPFGAKKTFVYPHETGNTMLFPLLILLLFTLFIGSIGIPFDNGVKDNRILELTILSKWLTPSINLFQENSNSSINSYEFLTNAISSVSLAIFGLFIAYIFYGSAYSFFQNLNFQNSLVKKNPKKSFLDEVKKKIYSWSYNRGYIDFFYTRVFILGIRRLAELTHFFDKGVIDGIINGVGLAGFCIGEEIKYVGGGRISSYLFFFLCYVSLFLFFIP.

The next 17 helical transmembrane spans lie at 9-29, 39-59, 89-109, 125-145, 147-167, 185-205, 219-239, 258-278, 280-300, 327-347, 354-374, 396-416, 425-445, 542-562, 610-630, 691-711, and 717-737; these read WVIP…LFLI, IWAF…LHLS, VDPL…LVLI, FVYI…SNLI, IYFF…FWFT, GDFG…SLEF, NGIN…GAVA, TPIS…FLLA, LLPL…VGTI, LGYM…FHLI, ALLF…VGYS, TTFL…CFWS, WLYS…TAFY, LFPL…GIPF, SLAI…YSFF, GVID…GEEI, and GRIS…LFFI.

It belongs to the complex I subunit 5 family. NDH is composed of at least 16 different subunits, 5 of which are encoded in the nucleus.

It localises to the plastid. The protein localises to the chloroplast thylakoid membrane. The enzyme catalyses a plastoquinone + NADH + (n+1) H(+)(in) = a plastoquinol + NAD(+) + n H(+)(out). It carries out the reaction a plastoquinone + NADPH + (n+1) H(+)(in) = a plastoquinol + NADP(+) + n H(+)(out). Its function is as follows. NDH shuttles electrons from NAD(P)H:plastoquinone, via FMN and iron-sulfur (Fe-S) centers, to quinones in the photosynthetic chain and possibly in a chloroplast respiratory chain. The immediate electron acceptor for the enzyme in this species is believed to be plastoquinone. Couples the redox reaction to proton translocation, and thus conserves the redox energy in a proton gradient. The chain is NAD(P)H-quinone oxidoreductase subunit 5, chloroplastic (ndhF) from Sorghum bicolor (Sorghum).